We begin with the raw amino-acid sequence, 647 residues long: Frizzled-1 (647 aa).

A signal peptide spans 1-69 (MAEEEAPKKS…WLLEAPLLLG (69 aa)). The Extracellular segment spans residues 73–322 (QAAGQGPGQG…PEELRFSRTW (250 aa)). Residues 74–104 (AAGQGPGQGPGPGQQPPPPPQQQQSGQQYNG) form a disordered region. The FZ domain maps to 111 to 230 (PDHGYCQPIS…HGAGELCVGQ (120 aa)). 5 disulfide bridges follow: cysteine 116/cysteine 177, cysteine 124/cysteine 170, cysteine 161/cysteine 198, cysteine 187/cysteine 227, and cysteine 191/cysteine 215. Asparagine 130 is a glycosylation site (N-linked (GlcNAc...) asparagine). The N-linked (GlcNAc...) asparagine glycan is linked to asparagine 231. The chain crosses the membrane as a helical span at residues 323 to 343 (IGIWSVLCCASTLFTVLTYLV). At 344 to 354 (DMRRFSYPERP) the chain is on the cytoplasmic side. Residues 355–375 (IIFLSGCYTAVAVAYIAGFLL) form a helical membrane-spanning segment. Residues 376 to 402 (EDRVVCNDKFAEDGARTVAQGTKKEGC) lie on the Extracellular side of the membrane. A helical transmembrane segment spans residues 403 to 423 (TILFMMLYFFSMASSIWWVIL). Residues 424-445 (SLTWFLAAGMKWGHEAIEANSQ) are Cytoplasmic-facing. Residues 446–466 (YFHLAAWAVPAIKTITILALG) form a helical membrane-spanning segment. The Extracellular portion of the chain corresponds to 467-489 (QVDGDVLSGVCFVGLNNVDALRG). Residues 490–510 (FVLAPLFVYLFIGTSFLLAGF) form a helical membrane-spanning segment. Residues 511–536 (VSLFRIRTIMKHDGTKTEKLEKLMVR) lie on the Cytoplasmic side of the membrane. Residues 537–557 (IGVFSVLYTVPATIVIACYFY) form a helical membrane-spanning segment. Residues 558–601 (EQAFRDQWERSWVAQSCKSYAIPCPHLQAGGGAPPHPPMSPDFT) are Extracellular-facing. The chain crosses the membrane as a helical span at residues 602-622 (VFMIKYLMTLIVGITSGFWIW). Over 623–647 (SGKTLNSWRKFYTRLTNSKQGETTV) the chain is Cytoplasmic. Positions 625-630 (KTLNSW) match the Lys-Thr-X-X-X-Trp motif, mediates interaction with the PDZ domain of Dvl family members motif. The short motif at 645 to 647 (TTV) is the PDZ-binding element.

The protein belongs to the G-protein coupled receptor Fz/Smo family. As to quaternary structure, interacts with MYOC. Interacts with WNT7B. In terms of assembly, (Microbial infection) Interacts with C.difficile toxin TcdB; frizzled receptors constitute the major host receptors for TcdB in the colonic epithelium. Post-translationally, ubiquitinated by ZNRF3, leading to its degradation by the proteasome. Expressed in adult heart, placenta, lung, kidney, pancreas, prostate, and ovary and in fetal lung and kidney.

The protein localises to the cell membrane. Receptor for Wnt proteins. Activated by WNT3A, WNT3, WNT1 and to a lesser extent WNT2, but apparently not by WNT4, WNT5A, WNT5B, WNT6, WNT7A or WNT7B. Contradictory results showing activation by WNT7B have been described for mouse. Functions in the canonical Wnt/beta-catenin signaling pathway. The canonical Wnt/beta-catenin signaling pathway leads to the activation of disheveled proteins, inhibition of GSK-3 kinase, nuclear accumulation of beta-catenin and activation of Wnt target genes. A second signaling pathway involving PKC and calcium fluxes has been seen for some family members, but it is not yet clear if it represents a distinct pathway or if it can be integrated in the canonical pathway, as PKC seems to be required for Wnt-mediated inactivation of GSK-3 kinase. Both pathways seem to involve interactions with G-proteins. May be involved in transduction and intercellular transmission of polarity information during tissue morphogenesis and/or in differentiated tissues. Functionally, (Microbial infection) Acts as a receptor for C.difficile toxin TcdB in the colonic epithelium. This is Frizzled-1 (FZD1) from Homo sapiens (Human).